Consider the following 369-residue polypeptide: 3',5'-cyclic-nucleotide phosphodiesterase 1 (369 aa).

The protein belongs to the cyclic nucleotide phosphodiesterase class-II family.

The enzyme catalyses a nucleoside 3',5'-cyclic phosphate + H2O = a nucleoside 5'-phosphate + H(+). Functionally, controls the level of cAMP in yeast cells, together with the high-affinity cAMP phosphodiesterase (PDE2). This is 3',5'-cyclic-nucleotide phosphodiesterase 1 (PDE1) from Saccharomyces cerevisiae (strain ATCC 204508 / S288c) (Baker's yeast).